Reading from the N-terminus, the 104-residue chain is Large ribosomal subunit protein uL24 (104 aa).

It belongs to the universal ribosomal protein uL24 family. In terms of assembly, part of the 50S ribosomal subunit.

In terms of biological role, one of two assembly initiator proteins, it binds directly to the 5'-end of the 23S rRNA, where it nucleates assembly of the 50S subunit. Functionally, one of the proteins that surrounds the polypeptide exit tunnel on the outside of the subunit. In Erwinia tasmaniensis (strain DSM 17950 / CFBP 7177 / CIP 109463 / NCPPB 4357 / Et1/99), this protein is Large ribosomal subunit protein uL24.